The primary structure comprises 226 residues: Leucyl/phenylalanyl-tRNA--protein transferase (226 aa).

It belongs to the L/F-transferase family.

The protein resides in the cytoplasm. It carries out the reaction N-terminal L-lysyl-[protein] + L-leucyl-tRNA(Leu) = N-terminal L-leucyl-L-lysyl-[protein] + tRNA(Leu) + H(+). It catalyses the reaction N-terminal L-arginyl-[protein] + L-leucyl-tRNA(Leu) = N-terminal L-leucyl-L-arginyl-[protein] + tRNA(Leu) + H(+). The catalysed reaction is L-phenylalanyl-tRNA(Phe) + an N-terminal L-alpha-aminoacyl-[protein] = an N-terminal L-phenylalanyl-L-alpha-aminoacyl-[protein] + tRNA(Phe). Its function is as follows. Functions in the N-end rule pathway of protein degradation where it conjugates Leu, Phe and, less efficiently, Met from aminoacyl-tRNAs to the N-termini of proteins containing an N-terminal arginine or lysine. This Pseudomonas putida (strain W619) protein is Leucyl/phenylalanyl-tRNA--protein transferase.